Reading from the N-terminus, the 70-residue chain is Cold shock-like protein CspH (70 aa).

The region spanning 7–67 is the CSD domain; it reads GIVKTFDCKS…GLRGPTAANV (61 aa).

The protein resides in the cytoplasm. The sequence is that of Cold shock-like protein CspH (cspH) from Salmonella typhi.